Here is a 652-residue protein sequence, read N- to C-terminus: O-fucosyltransferase 15 (652 aa).

Residues 91-111 (TAAFVIVLVGFFIFVNWFMLS) form a helical; Signal-anchor for type II membrane protein membrane-spanning segment. N-linked (GlcNAc...) asparagine glycans are attached at residues Asn-139, Asn-169, and Asn-251. 426–428 (HLR) provides a ligand contact to substrate. Asn-464, Asn-546, and Asn-607 each carry an N-linked (GlcNAc...) asparagine glycan.

It belongs to the glycosyltransferase GT106 family.

The protein resides in the membrane. The protein operates within glycan metabolism. This is O-fucosyltransferase 15 from Arabidopsis thaliana (Mouse-ear cress).